Consider the following 422-residue polypeptide: uncharacterized protein (422 aa).

Belongs to the asfivirus K421R family.

Its subcellular location is the virion. This is an uncharacterized protein from Ornithodoros (relapsing fever ticks).